Here is a 342-residue protein sequence, read N- to C-terminus: Probable dual-specificity RNA methyltransferase RlmN (342 aa).

The active-site Proton acceptor is Glu-91. The Radical SAM core domain maps to 97–327; the sequence is YKHGNSICVS…TTIRREMGAD (231 aa). The cysteines at positions 104 and 332 are disulfide-linked. 3 residues coordinate [4Fe-4S] cluster: Cys-111, Cys-115, and Cys-118. S-adenosyl-L-methionine contacts are provided by residues 158 to 159, Ser-190, 213 to 215, and Asn-289; these read GE and SLH. The S-methylcysteine intermediate role is filled by Cys-332.

It belongs to the radical SAM superfamily. RlmN family. It depends on [4Fe-4S] cluster as a cofactor.

Its subcellular location is the cytoplasm. It carries out the reaction adenosine(2503) in 23S rRNA + 2 reduced [2Fe-2S]-[ferredoxin] + 2 S-adenosyl-L-methionine = 2-methyladenosine(2503) in 23S rRNA + 5'-deoxyadenosine + L-methionine + 2 oxidized [2Fe-2S]-[ferredoxin] + S-adenosyl-L-homocysteine. The enzyme catalyses adenosine(37) in tRNA + 2 reduced [2Fe-2S]-[ferredoxin] + 2 S-adenosyl-L-methionine = 2-methyladenosine(37) in tRNA + 5'-deoxyadenosine + L-methionine + 2 oxidized [2Fe-2S]-[ferredoxin] + S-adenosyl-L-homocysteine. Its function is as follows. Specifically methylates position 2 of adenine 2503 in 23S rRNA and position 2 of adenine 37 in tRNAs. This chain is Probable dual-specificity RNA methyltransferase RlmN, found in Clostridium botulinum (strain Langeland / NCTC 10281 / Type F).